The following is a 1255-amino-acid chain: MANSERTNGLQETNQRYGPLQEQVPKVGNQAVGPIEIFRFADNLDIVLMTLGILASMINGATVPLMSLVLGEISDHLINGCLVQTNRTKYQNCSQTQEKLNEDIIVLTLYYIGIGAAALIFGYVQISFWVITAARQTTRIRKQFFHSILAQDISWFDGSDICELNTRMTGDINKLCDGIGDKIPLMFQNISGFSIGLVISLIKSWKLSLVVLSTSPLIMASSALCSRMIISLTSKELDAYSKAGAVAEEALSSIQTVTAFGAQEKEIQRYTQHLKDAKDAGIKRATASKLSLGAVYFFMNGAYGLAFWYGTSLIFGGEPGYTIGTILAVFFSVIHSSYCIGSVAPHLETFTVARGAAFNIFQVIDKKPNIDNFSTAGFVPECIEGNIEFKNVSFSYPSRPSAKVLKGLNLKIKAGETVALVGPSGSGKSTTVQLLQRLYDPEDGCITVDENDIRAQNVRHYREQIGVVRQEPVLFGTTIGNNIKFGREGVGEKEMEQAAREANAYDFIMAFPKKFNTLVGEKGAQMSGGQKQRIAIARALVRNPKILILDEATSALDTESESLVQTALEKASKGRTTIVVAHRLSTIRGADLIVTMKDGMVVEKGTHAELMAKQGLYYSLAMAQDIKKVDEQMESRTCSTAGNASYGSLCDVNSAKAPCTDQLEEAVHHQKTSLPEVSLLKIFKLSKSEWPFVVLGTLASALNGSVHPVFSIIFGKLVTMFEDKNKATLKQDAELYSMMLVVLGIVALVTYLMQGLFYGRAEENLAMRLRHSAFKAMLYQDMAWYDDKENNTGALTTTLAVDVAQIQGAATSRLGIVTQDVSNMSLSILISFIYGWEMTLLILSFAPVLAVTGMIQTAAMAGFANRDKQALKRAGKIATEAVENIRTVVSLTRERAFEQMYEETLQTQHRNALKRAHITGCCYAVSHAFVHFAHAAGFRFGAYLIQAGRMMPEGMFIVFTAIAYGAMAIGETLVWAPEYSKAKAGASHLFALLKNKPTINSCSQSGEKPDTCEGNLEFREVSFVYPCRPEVPVLQNMSLSIEKGKTVAFVGSSGCGKSTCVQLLQRFYDPMKGQVLLDGVDVKELNVQWLRSQTAIVSQEPVLFNCSIAENIAYGDNSRMVPLEEIKEVADAANIHSFIEGLPRKYNTLVGLRGVQLSGGQKQRLAIARALLRKPKILLLDEATSALDNESEKVVQQALDKARRGKTCLVVAHRLSTIQNADMIVVLQNGSIKEQGTHQELLRNGDTYFKLVAAH.

Residues Ile46–Met66 traverse the membrane as a helical segment. Positions Leu51–Thr351 constitute an ABC transmembrane type-1 1 domain. 2 N-linked (GlcNAc...) asparagine glycosylation sites follow: Asn86 and Asn92. A helical membrane pass occupies residues Ile104–Val124. A glycan (N-linked (GlcNAc...) asparagine) is linked at Asn189. Helical transmembrane passes span Leu290–Gly310 and Ile314–Ile334. N-linked (GlcNAc...) asparagine glycans are attached at residues Asn372 and Asn391. One can recognise an ABC transporter 1 domain in the interval Ile387–Ala623. Gly422–Ser429 contributes to the ATP binding site. Residue Asn643 is glycosylated (N-linked (GlcNAc...) asparagine). The next 2 helical transmembrane spans lie at Val694–Phe714 and Met738–Tyr758. One can recognise an ABC transmembrane type-1 2 domain in the interval Val694 to Lys981. N-linked (GlcNAc...) asparagine glycosylation is present at Asn790. Helical transmembrane passes span Leu814–Trp836, Leu841–Phe863, and Met955–Trp975. The region spanning Leu1016–Ala1254 is the ABC transporter 2 domain. Asn1036 carries N-linked (GlcNAc...) asparagine glycosylation. Gly1051–Ser1058 provides a ligand contact to ATP. N-linked (GlcNAc...) asparagine glycans are attached at residues Asn1105, Asn1189, and Asn1229.

The protein belongs to the ABC transporter superfamily. ABCB family. Multidrug resistance exporter (TC 3.A.1.201) subfamily. In developing eye, expressed in basal limbal epithelium but not in central cornea. Acts as a marker of limbal stem cells.

It is found in the cell membrane. The enzyme catalyses daunorubicin(in) + ATP + H2O = daunorubicin(out) + ADP + phosphate + H(+). Functionally, energy-dependent efflux transporter responsible for decreased drug accumulation in multidrug-resistant cells. Specifically present in limbal stem cells, where it plays a key role in corneal development and repair. The sequence is that of ATP-binding cassette sub-family B member 5 from Mus musculus (Mouse).